The following is a 237-amino-acid chain: Uridylate kinase (237 aa).

Residue 12–15 coordinates ATP; it reads KLSG. The interval 20-25 is involved in allosteric activation by GTP; the sequence is GDEGFG. Gly54 is a UMP binding site. Positions 55 and 59 each coordinate ATP. UMP-binding positions include Asp74 and 135–142; that span reads TGSPFFTT. The ATP site is built by Thr162, Tyr168, and Asp171.

The protein belongs to the UMP kinase family. As to quaternary structure, homohexamer.

It localises to the cytoplasm. The enzyme catalyses UMP + ATP = UDP + ADP. The protein operates within pyrimidine metabolism; CTP biosynthesis via de novo pathway; UDP from UMP (UMPK route): step 1/1. With respect to regulation, allosterically activated by GTP. Inhibited by UTP. Catalyzes the reversible phosphorylation of UMP to UDP. The sequence is that of Uridylate kinase from Haemophilus ducreyi (strain 35000HP / ATCC 700724).